A 527-amino-acid polypeptide reads, in one-letter code: Monooxygenase aurF (527 aa).

An N-terminal signal peptide occupies residues 1-19 (MPNPTVAIVGLGALGLVTL). Residue Asn59 is glycosylated (N-linked (GlcNAc...) asparagine).

The protein belongs to the FMO family. In terms of assembly, might be part of an extracellular enzyme complex composed of GIP1, aurF, aurO and aurS. The cofactor is FAD.

The protein localises to the secreted. Its subcellular location is the extracellular space. It participates in pigment biosynthesis. Functionally, monooxygenase; part of the gene cluster that mediates the biosynthesis of aurofusarin, a red mycelium pigment which is acting as a mycotoxin. The first step is performed by the polyketide synthase which condenses one acetyl-CoA and 6 malonyl-CoA units to form the first intermediate, the cyclic heptaketide and yellow pigment YWA1. The C2 hydroxyl group in the pyrone ring of YWA1 is probably formed during ring closure by an aldol-type cyclization reaction. The dehydratase aurZ then acts as the first tailoring enzyme in the aurofusarin biosynthetic pathway by converting YWA1 to nor-rubrofusarin. Nor-rubrofusarin is then methylated to rubrofusarin by the O-methyltransferase aurJ. Rubrofusarin is then transported across the plasma membrane by the rubrofusarin-specific pump aurT for further enzymatic processing by the extracellular complex composed of GIP1, aurF, aurO and aurS to yield aurofusarin. The protein is Monooxygenase aurF of Gibberella zeae (strain ATCC MYA-4620 / CBS 123657 / FGSC 9075 / NRRL 31084 / PH-1) (Wheat head blight fungus).